The chain runs to 197 residues: Casparian strip membrane protein 3 (197 aa).

The Cytoplasmic portion of the chain corresponds to 1-35 (MSARVDIPADTSAAAKGTAPLIAASTHVKGGYKKG). A helical membrane pass occupies residues 36–56 (LAIFDLVLRLGAVVTALAAAA). Residues 57–85 (TMGTTDQTLPFFTQFFQFQASYDDLPTFQ) are Extracellular-facing. The chain crosses the membrane as a helical span at residues 86 to 106 (FFVIAMAIVSGYLVLSLPFSI). The Cytoplasmic portion of the chain corresponds to 107-119 (VAIIRPHATGPRL). A helical transmembrane segment spans residues 120 to 140 (LLIILDTVALTLNTAAAAAAV). Residues 141–171 (AIVDLAQNGNSSANWLGICQQFGDFCQKASG) lie on the Extracellular side of the membrane. The N-linked (GlcNAc...) asparagine glycan is linked to Asn-150. The helical transmembrane segment at 172–192 (AVVASFIAAGVLLFLIVISAL) threads the bilayer. Residues 193–197 (ALRKR) lie on the Cytoplasmic side of the membrane.

This sequence belongs to the Casparian strip membrane proteins (CASP) family. As to quaternary structure, homodimer and heterodimers.

Its subcellular location is the cell membrane. In terms of biological role, regulates membrane-cell wall junctions and localized cell wall deposition. Required for establishment of the Casparian strip membrane domain (CSD) and the subsequent formation of Casparian strips, a cell wall modification of the root endodermis that determines an apoplastic barrier between the intraorganismal apoplasm and the extraorganismal apoplasm and prevents lateral diffusion. The chain is Casparian strip membrane protein 3 from Populus trichocarpa (Western balsam poplar).